The chain runs to 415 residues: Corticotropin-releasing factor receptor 1 (415 aa).

A signal peptide spans 1 to 23; the sequence is MGRRPQLRLVKALLLLGLNPVST. Topologically, residues 24 to 111 are extracellular; sequence SLQDQRCENL…CQEILNEEKK (88 aa). Cystine bridges form between Cys30–Cys54, Cys44–Cys87, and Cys68–Cys102. Residues Asn38, Asn45, Asn78, Asn90, and Asn98 are each glycosylated (N-linked (GlcNAc...) asparagine). The tract at residues 99-108 is important for peptide agonist binding; that stretch reads YSECQEILNE. Residues 112-142 form a helical membrane-spanning segment; the sequence is SKVHYHVAVIINYLGHCISLVALLVAFVLFL. Residues 143–149 are Cytoplasmic-facing; the sequence is RLRSIRC. Residues 150 to 174 traverse the membrane as a helical segment; it reads LRNIIHWNLISAFILRNATWFVVQL. Residues 175–189 lie on the Extracellular side of the membrane; that stretch reads TVSPEVHQSNVAWCR. An intrachain disulfide couples Cys188 to Cys258. The chain crosses the membrane as a helical span at residues 190–218; sequence LVTAAYNYFHVTNFFWMFGEGCYLHTAIV. The Cytoplasmic portion of the chain corresponds to 219 to 225; it reads LTYSTDR. A helical transmembrane segment spans residues 226-253; that stretch reads LRKWMFVCIGWGVPFPIIVAWAIGKLHY. The Extracellular portion of the chain corresponds to 254–269; that stretch reads DNEKCWFGKRPGVYTD. A helical membrane pass occupies residues 270 to 295; that stretch reads YIYQGPMILVLLINFIFLFNIVRILM. Positions 280–290 are important for antagonist binding; that stretch reads LLINFIFLFNI. The Cytoplasmic portion of the chain corresponds to 296 to 306; sequence TKLRASTTSET. Ser301 carries the post-translational modification Phosphoserine; by PKA. The helical transmembrane segment at 307–331 threads the bilayer; it reads IQYRKAVKATLVLLPLLGITYMLFF. The Extracellular segment spans residues 332–338; it reads VNPGEDE. Residues 339-368 form a helical membrane-spanning segment; it reads VSRVVFIYFNSFLESFQGFFVSVFYCFLNS. Over 369-415 the chain is Cytoplasmic; sequence EVRSAIRKRWRRWQDKHSIRARVARAMSIPTSPTRVSFHSIKQSTAV.

Belongs to the G-protein coupled receptor 2 family. As to quaternary structure, interacts (via N-terminal extracellular domain) with CRH and UCN. Interacts with DLG1; this inhibits endocytosis of CRHR1 after agonist binding. Heterodimer; heterodimerizes with GPER1. Post-translationally, C-terminal Ser or Thr residues may be phosphorylated. In terms of processing, phosphorylation at Ser-301 by PKA prevents maximal coupling to Gq-protein, and thereby negatively regulates downstream signaling. As to expression, detected in brain, especially in cerebellum. Detected in pituitary gland, and at lower levels in the olfactory bulb.

It localises to the cell membrane. The protein resides in the endosome. In terms of biological role, G-protein coupled receptor for CRH (corticotropin-releasing factor) and UCN (urocortin). Has high affinity for CRH and UCN. Ligand binding causes a conformation change that triggers signaling via guanine nucleotide-binding proteins (G proteins) and down-stream effectors, such as adenylate cyclase. Promotes the activation of adenylate cyclase, leading to increased intracellular cAMP levels. Inhibits the activity of the calcium channel CACNA1H. Required for normal embryonic development of the adrenal gland and for normal hormonal responses to stress. Plays a role in the response to anxiogenic stimuli. In Rattus norvegicus (Rat), this protein is Corticotropin-releasing factor receptor 1 (Crhr1).